A 363-amino-acid polypeptide reads, in one-letter code: NAD(P)H-quinone oxidoreductase subunit 1, chloroplastic (363 aa).

6 consecutive transmembrane segments (helical) span residues 27–47 (IWLF…VLVI), 98–118 (FSIG…VIPF), 127–147 (LSIG…GLLM), 248–268 (YSGI…LVSS), 300–320 (VFGT…FLFI), and 336–356 (LLNL…LLTT).

This sequence belongs to the complex I subunit 1 family. NDH is composed of at least 16 different subunits, 5 of which are encoded in the nucleus.

It is found in the plastid. Its subcellular location is the chloroplast thylakoid membrane. It catalyses the reaction a plastoquinone + NADH + (n+1) H(+)(in) = a plastoquinol + NAD(+) + n H(+)(out). The catalysed reaction is a plastoquinone + NADPH + (n+1) H(+)(in) = a plastoquinol + NADP(+) + n H(+)(out). In terms of biological role, NDH shuttles electrons from NAD(P)H:plastoquinone, via FMN and iron-sulfur (Fe-S) centers, to quinones in the photosynthetic chain and possibly in a chloroplast respiratory chain. The immediate electron acceptor for the enzyme in this species is believed to be plastoquinone. Couples the redox reaction to proton translocation, and thus conserves the redox energy in a proton gradient. The sequence is that of NAD(P)H-quinone oxidoreductase subunit 1, chloroplastic from Amborella trichopoda.